The following is a 545-amino-acid chain: T-complex protein 1 subunit alpha (545 aa).

Belongs to the TCP-1 chaperonin family. As to quaternary structure, heterooligomeric complex of about 850 to 900 kDa that forms two stacked rings, 12 to 16 nm in diameter.

The protein localises to the cytoplasm. In terms of biological role, molecular chaperone; assists the folding of proteins upon ATP hydrolysis. Known to play a role, in vitro, in the folding of actin and tubulin. The sequence is that of T-complex protein 1 subunit alpha (TCP-1A) from Schistosoma mansoni (Blood fluke).